A 423-amino-acid polypeptide reads, in one-letter code: Sorting nexin-4 (423 aa).

Positions methionine 1–proline 21 are enriched in basic and acidic residues. Residues methionine 1 to proline 25 are disordered. Residues glutamate 29–serine 157 enclose the PX domain. Positions 78, 80, 104, and 123 each coordinate a 1,2-diacyl-sn-glycero-3-phospho-(1D-myo-inositol-3-phosphate). Coiled coils occupy residues lysine 217–lysine 252 and serine 346–lysine 381.

Belongs to the sorting nexin family. As to quaternary structure, forms a complex with ATG20 and ATG17. Binds also to SNC1 and SNX41.

It is found in the cytoplasm. Its subcellular location is the cytosol. The protein resides in the preautophagosomal structure membrane. It localises to the endosome membrane. In terms of biological role, sorting nexin, involved in the separation or division of vacuoles throughout the entire life cycle of the cells. Involved in retrieval of late-Golgi SNAREs from post-Golgi endosomes to the trans-Golgi network, for cytoplasm to vacuole transport (Cvt), and autophagy of large cargos including mitophagy, pexophagy and glycophagy. Involved in proper sorting of the v-SNARE protein SNC1. This is Sorting nexin-4 from Saccharomyces cerevisiae (strain ATCC 204508 / S288c) (Baker's yeast).